Consider the following 330-residue polypeptide: Aspartate--ammonia ligase (330 aa).

Belongs to the class-II aminoacyl-tRNA synthetase family. AsnA subfamily.

The protein resides in the cytoplasm. The enzyme catalyses L-aspartate + NH4(+) + ATP = L-asparagine + AMP + diphosphate + H(+). The protein operates within amino-acid biosynthesis; L-asparagine biosynthesis; L-asparagine from L-aspartate (ammonia route): step 1/1. This chain is Aspartate--ammonia ligase, found in Cronobacter sakazakii (strain ATCC BAA-894) (Enterobacter sakazakii).